The primary structure comprises 3227 residues: E3 ubiquitin-protein ligase ptr1 (3227 aa).

Disordered regions lie at residues 1806–1836 (SGAA…PPDL), 1869–1894 (MEFE…VMYS), 1908–1929 (QDAS…GDVI), and 2577–2607 (ATTG…KDKK). Positions 1811-1823 (DSMGDQSLSSSSE) are enriched in low complexity. A compositionally biased stretch (acidic residues) spans 1883 to 1894 (VSEDDADDVMYS). The segment covering 2577–2601 (ATTGYTNDQDSRGSTVPKQDPGTTA) has biased composition (polar residues). The region spanning 2891 to 3227 (DADEVKFSKL…NEGSEGFGFA (337 aa)) is the HECT domain. Residue Cys-3194 is the Glycyl thioester intermediate of the active site.

It belongs to the UPL family. TOM1/PTR1 subfamily.

The protein localises to the nucleus. The catalysed reaction is S-ubiquitinyl-[E2 ubiquitin-conjugating enzyme]-L-cysteine + [acceptor protein]-L-lysine = [E2 ubiquitin-conjugating enzyme]-L-cysteine + N(6)-ubiquitinyl-[acceptor protein]-L-lysine.. Its pathway is protein modification; protein ubiquitination. Its function is as follows. Probable ubiquitin ligase protein involved in mRNA export. E3 ubiquitin ligase proteins mediate ubiquitination and subsequent proteasomal degradation of target proteins. Probably participates in mRNA export from the nucleus by regulating the transport of hnRNP proteins such as rae1. This is E3 ubiquitin-protein ligase ptr1 (ptr1) from Schizosaccharomyces pombe (strain 972 / ATCC 24843) (Fission yeast).